The chain runs to 692 residues: Protein arginine N-methyltransferase 7 (692 aa).

2 SAM-dependent MTase PRMT-type domains span residues 14-359 (ENSW…YSLW) and 368-692 (AKTV…QEKR).

Belongs to the class I-like SAM-binding methyltransferase superfamily. Protein arginine N-methyltransferase family. PRMT7 subfamily.

In terms of biological role, essential arginine methyltransferase that can both catalyze the formation of omega-N monomethylarginine (MMA) and symmetrical dimethylarginine (sDMA). Specifically mediates the symmetrical dimethylation of arginine residues in the small nuclear ribonucleoproteins SmD1 and SmD3. This chain is Protein arginine N-methyltransferase 7 (Art7), found in Drosophila pseudoobscura pseudoobscura (Fruit fly).